Here is a 159-residue protein sequence, read N- to C-terminus: Cytochrome c-type biogenesis protein CcmE (159 aa).

Residues 1–8 (MNLRRKNR) are Cytoplasmic-facing. The helical; Signal-anchor for type II membrane protein transmembrane segment at 9-29 (LWVVCAVLAGLALTTALVLYA) threads the bilayer. The Periplasmic portion of the chain corresponds to 30–159 (LRANIDLFYT…PQRADKDTSS (130 aa)). The disordered stretch occupies residues 129 to 159 (KHDENYTPPEVEKAMQENHRRPQRADKDTSS). Residues histidine 130 and tyrosine 134 each contribute to the heme site.

This sequence belongs to the CcmE/CycJ family.

Its subcellular location is the cell inner membrane. Functionally, heme chaperone required for the biogenesis of c-type cytochromes. Transiently binds heme delivered by CcmC and transfers the heme to apo-cytochromes in a process facilitated by CcmF and CcmH. This chain is Cytochrome c-type biogenesis protein CcmE, found in Salmonella paratyphi A (strain ATCC 9150 / SARB42).